Reading from the N-terminus, the 370-residue chain is Aminomethyltransferase (370 aa).

Belongs to the GcvT family. In terms of assembly, the glycine cleavage system is composed of four proteins: P, T, L and H.

It carries out the reaction N(6)-[(R)-S(8)-aminomethyldihydrolipoyl]-L-lysyl-[protein] + (6S)-5,6,7,8-tetrahydrofolate = N(6)-[(R)-dihydrolipoyl]-L-lysyl-[protein] + (6R)-5,10-methylene-5,6,7,8-tetrahydrofolate + NH4(+). The glycine cleavage system catalyzes the degradation of glycine. The protein is Aminomethyltransferase of Clostridium botulinum (strain ATCC 19397 / Type A).